We begin with the raw amino-acid sequence, 1512 residues long: Sterol 3-beta-glucosyltransferase (1512 aa).

2 disordered regions span residues 22-50 and 150-222; these read FSGS…YHSL and DEHT…DTDV. The span at 156–169 shows a compositional bias: acidic residues; sequence SEEEDSADKEEESI. Residues 190 to 222 are compositionally biased toward low complexity; sequence TTATLITTQITRTKTATTATPTPTPTSSVDTDV. Residues 296-331 form the GRAM 1 domain; sequence LQRVFDLSDEDTFCGNYSAWLIKDVLLQGHVYLTKD. The PH domain occupies 359–520; sequence SIVYSGNLGL…WCNNITKLIF (162 aa). In terms of domain architecture, GRAM 2 spans 816–880; sequence RNFQSHFSTN…TDIEEVRASR (65 aa). The UDP-alpha-D-glucose site is built by Ser-1024, Arg-1025, Asp-1027, Asn-1299, Ile-1328, His-1330, His-1343, Ser-1346, Gly-1347, Thr-1348, Asp-1367, and Gln-1368. Residues 1450 to 1512 are disordered; that stretch reads YKRHHPVPSG…NNSPSQNSSN (63 aa). Residues 1467–1493 are compositionally biased toward acidic residues; it reads TDSDDYDDDEDDDESDKDDEEEEEENS. Residues 1501-1512 show a composition bias toward polar residues; it reads GVNNSPSQNSSN.

Belongs to the glycosyltransferase 28 family.

Its subcellular location is the cytoplasm. The protein resides in the membrane. It catalyses the reaction a sterol + UDP-alpha-D-glucose = a sterol 3-beta-D-glucoside + UDP + H(+). It carries out the reaction ergosterol + UDP-alpha-D-glucose = ergosteryl 3-beta-D-glucoside + UDP + H(+). Functionally, sterol glycosyltransferase responsible for the glycosylation of ergosterol to form ergosterol-glucoside. The chain is Sterol 3-beta-glucosyltransferase from Candida albicans (strain SC5314 / ATCC MYA-2876) (Yeast).